Here is a 608-residue protein sequence, read N- to C-terminus: Pentatricopeptide repeat-containing protein At5g40410, mitochondrial (608 aa).

The N-terminal 28 residues, 1 to 28 (MIKANVYSCSKFRFLYRRRFLSQSSFVH), are a transit peptide targeting the mitochondrion. PPR repeat units lie at residues 30–64 (LDANVSSLIAAVKSCVSIELCRLLHCKVVKSVSYR), 65–95 (HGFIGDQLVGCYLRLGHDVCAEKLFDEMPER), 96–130 (DLVSWNSLISGYSGRGYLGKCFEVLSRMMISEVGF), 133–167 (NEVTFLSMISACVYGGSKEEGRCIHGLVMKFGVLE), 168–198 (EVKVVNAFINWYGKTGDLTSSCKLFEDLSIK), 199–233 (NLVSWNTMIVIHLQNGLAEKGLAYFNMSRRVGHEP), 234–268 (DQATFLAVLRSCEDMGVVRLAQGIHGLIMFGGFSG), 269–299 (NKCITTALLDLYSKLGRLEDSSTVFHEITSP), 300–334 (DSMAWTAMLAAYATHGFGRDAIKHFELMVHYGISP), 335–365 (DHVTFTHLLNACSHSGLVEEGKHYFETMSKR), and 371–401 (RLDHYSCMVDLLGRSGLLQDAYGLIKEMPME). A type E motif region spans residues 406-481 (VWGALLGACR…ASGCSYIEHG (76 aa)). Positions 482 to 512 (NKIHKFVVGDWSHPESEKIQKKLKEIRKKMK) are type E(+) motif. The segment at 514-608 (EMGYKSKTEF…DGSCSCSDYW (95 aa)) is type DYW motif.

Belongs to the PPR family. PCMP-H subfamily.

It localises to the mitochondrion. This is Pentatricopeptide repeat-containing protein At5g40410, mitochondrial (PCMP-H15) from Arabidopsis thaliana (Mouse-ear cress).